A 135-amino-acid chain; its full sequence is C-type natriuretic peptide (135 aa).

The signal sequence occupies residues M1–A25. A propeptide spanning residues D26–K113 is cleaved from the precursor. The interval E46 to D67 is disordered. C119 and C135 form a disulfide bridge.

This sequence belongs to the natriuretic peptide family.

The protein resides in the secreted. Its function is as follows. Hormone which may be vasoactive and natriuretic. Has a cGMP-stimulating activity. This Squalus acanthias (Spiny dogfish) protein is C-type natriuretic peptide.